The chain runs to 240 residues: ATP-dependent dethiobiotin synthetase BioD 1 (240 aa).

13–18 (DVGKTV) is a binding site for ATP. Threonine 17 is a Mg(2+) binding site. Lysine 38 is an active-site residue. Serine 42 serves as a coordination point for substrate. ATP is bound by residues aspartate 55, 116–119 (EGAG), 176–177 (NE), 205–207 (PYL), and glutamate 212. The Mg(2+) site is built by aspartate 55 and glutamate 116.

It belongs to the dethiobiotin synthetase family. In terms of assembly, homodimer. Mg(2+) serves as cofactor.

It is found in the cytoplasm. It catalyses the reaction (7R,8S)-7,8-diammoniononanoate + CO2 + ATP = (4R,5S)-dethiobiotin + ADP + phosphate + 3 H(+). The protein operates within cofactor biosynthesis; biotin biosynthesis; biotin from 7,8-diaminononanoate: step 1/2. Its function is as follows. Catalyzes a mechanistically unusual reaction, the ATP-dependent insertion of CO2 between the N7 and N8 nitrogen atoms of 7,8-diaminopelargonic acid (DAPA, also called 7,8-diammoniononanoate) to form a ureido ring. The sequence is that of ATP-dependent dethiobiotin synthetase BioD 1 from Yersinia pestis.